The primary structure comprises 560 residues: 2-hydroxyacyl-CoA lyase (560 aa).

Glutamate 49 provides a ligand contact to thiamine diphosphate. Mg(2+) is bound by residues aspartate 446 and asparagine 473. The short motif at 558–560 is the Peroxisomal target signal 1 (PTS1) element; the sequence is PRL.

The protein belongs to the TPP enzyme family. It depends on Mg(2+) as a cofactor. The cofactor is thiamine diphosphate.

The protein localises to the cytoplasm. The protein resides in the peroxisome matrix. It carries out the reaction an (R)-2-hydroxy-long-chain-fatty acyl-CoA = a long-chain fatty aldehyde + formyl-CoA. The catalysed reaction is a 2-hydroxy-3-methyl fatty acyl-CoA = a 2-methyl-branched fatty aldehyde + formyl-CoA. Functionally, catalyzes a carbon-carbon cleavage reaction; cleaves a 2-hydroxy-3-methylacyl-CoA into formyl-CoA and a 2-methyl-branched fatty aldehyde. The protein is 2-hydroxyacyl-CoA lyase of Saccharomyces cerevisiae (strain ATCC 204508 / S288c) (Baker's yeast).